Reading from the N-terminus, the 247-residue chain is UPF0280 protein Mevan_0550 (247 aa).

The protein belongs to the UPF0280 family.

The protein is UPF0280 protein Mevan_0550 of Methanococcus vannielii (strain ATCC 35089 / DSM 1224 / JCM 13029 / OCM 148 / SB).